The primary structure comprises 117 residues: MLTFNKMKTTTCSLLICISLLQLMVPVNTEGTLESIVEKKVKELLANRDDCPSTVTKTFSCTSITASGRLASCPSGMTVTGCACGYGCGSWDIRDGNTCHCQCSTMDWATARCCQLA.

An N-terminal signal peptide occupies residues 1 to 29; the sequence is MLTFNKMKTTTCSLLICISLLQLMVPVNT. Intrachain disulfides connect Cys-61/Cys-114, Cys-73/Cys-113, Cys-82/Cys-99, Cys-84/Cys-101, and Cys-88/Cys-103.

Belongs to the resistin/FIZZ family. In terms of assembly, homodimer. Heterodimer with RETNLB. Expressed in colon, lung, spleen, pancreas, ileum and bone marrow (at protein level). In colon, found throughout the crypt and surface epithelium, including goblet cells (at protein level). Highest expression is observed in bone marrow, spleen and lung, with lower levels in other tissues. Detected at low levels in granulocytes, but not found in monocytes or lymphocytes. Has very weak expression in white adipose tissue.

The protein resides in the secreted. In terms of biological role, probable hormone. Promotes chemotaxis in myeloid cells. The chain is Resistin-like gamma from Mus musculus (Mouse).